Here is a 203-residue protein sequence, read N- to C-terminus: Chaperonin-like RbcX protein 2, chloroplastic (203 aa).

A chloroplast-targeting transit peptide spans Met-1–Asn-78.

Belongs to the RbcX family. As to quaternary structure, homodimer. Interacts with rbcL, atpB and RBCS-1B.

Its subcellular location is the plastid. The protein localises to the chloroplast stroma. Its function is as follows. Chaperone involved in RuBisCO assembly process. The chain is Chaperonin-like RbcX protein 2, chloroplastic from Arabidopsis thaliana (Mouse-ear cress).